The sequence spans 133 residues: Interleukin-5 (133 aa).

Positions 1–20 are cleaved as a signal peptide; that stretch reads MRRMLLHLSVLTLSCVWATA. N-linked (GlcNAc...) asparagine glycosylation is found at Asn46, Asn75, and Asn89.

This sequence belongs to the IL-5 family. Homodimer; disulfide-linked. Interacts with IL5RA. Interacts with CSF2RB. In terms of tissue distribution, expressed in lymphoid cells, including spleen, thymus, lymph nodes and peripheral blood mononuclear cells.

Its subcellular location is the secreted. In terms of biological role, homodimeric cytokine expressed predominantly by T-lymphocytes and NK cells that plays an important role in the survival, differentiation, and chemotaxis of eosinophils. Also acts on activated and resting B-cells to induce immunoglobulin production, growth, and differentiation. Mechanistically, exerts its biological effects through a receptor composed of IL5RA subunit and the cytokine receptor common subunit beta/CSF2RB. Binding to the receptor leads to activation of various kinases including LYN, SYK and JAK2 and thereby propagates signals through the RAS-MAPK and JAK-STAT5 pathways respectively. This chain is Interleukin-5 (Il5), found in Mus musculus (Mouse).